Here is an 87-residue protein sequence, read N- to C-terminus: Retinal rod rhodopsin-sensitive cGMP 3',5'-cyclic phosphodiesterase subunit gamma (87 aa).

M1 is modified (N-acetylmethionine). Basic and acidic residues predominate over residues 1–12; the sequence is MNLEPPKAEIRS. A disordered region spans residues 1-55; it reads MNLEPPKAEIRSATRVIGGPVTPRKGPPKFKQRQTRQFKSKPPKKGVQGFGDDIP. A compositionally biased stretch (basic residues) spans 26-44; sequence GPPKFKQRQTRQFKSKPPK.

The protein belongs to the rod/cone cGMP-PDE gamma subunit family. Oligomer composed of two catalytic chains (alpha and beta), an inhibitory chain (gamma) and the delta chain.

It carries out the reaction 3',5'-cyclic GMP + H2O = GMP + H(+). Participates in processes of transmission and amplification of the visual signal. cGMP-PDEs are the effector molecules in G-protein-mediated phototransduction in vertebrate rods and cones. The polypeptide is Retinal rod rhodopsin-sensitive cGMP 3',5'-cyclic phosphodiesterase subunit gamma (PDE6G) (Canis lupus familiaris (Dog)).